A 198-amino-acid polypeptide reads, in one-letter code: Recombination protein RecR (198 aa).

A C4-type zinc finger spans residues 57–72; sequence CSVCGNLTDEDPCSIC. The Toprim domain occupies 80-175; sequence SMILVVEDSK…KVTRLARGLA (96 aa).

It belongs to the RecR family.

Functionally, may play a role in DNA repair. It seems to be involved in an RecBC-independent recombinational process of DNA repair. It may act with RecF and RecO. The chain is Recombination protein RecR from Streptococcus uberis (strain ATCC BAA-854 / 0140J).